We begin with the raw amino-acid sequence, 321 residues long: Outer envelope protein 36, chloroplastic (321 aa).

The protein belongs to the OEP80 (TC 1.B.33.2) family. In terms of tissue distribution, expressed in germinating seeds.

It localises to the plastid. It is found in the chloroplast outer membrane. May play a role during plastid development. The protein is Outer envelope protein 36, chloroplastic of Arabidopsis thaliana (Mouse-ear cress).